Reading from the N-terminus, the 347-residue chain is Dihydroorotase (347 aa).

Zn(2+)-binding residues include His-14 and His-16. Residues 16–18 (HLR) and Asn-42 each bind substrate. Positions 100, 137, and 175 each coordinate Zn(2+). Lys-100 carries the post-translational modification N6-carboxylysine. His-137 provides a ligand contact to substrate. A substrate-binding site is contributed by Leu-220. Position 248 (Asp-248) interacts with Zn(2+). Residue Asp-248 is part of the active site. Substrate-binding residues include His-252 and Ala-264.

It belongs to the metallo-dependent hydrolases superfamily. DHOase family. Class II DHOase subfamily. In terms of assembly, homodimer. The cofactor is Zn(2+).

It catalyses the reaction (S)-dihydroorotate + H2O = N-carbamoyl-L-aspartate + H(+). Its pathway is pyrimidine metabolism; UMP biosynthesis via de novo pathway; (S)-dihydroorotate from bicarbonate: step 3/3. In terms of biological role, catalyzes the reversible cyclization of carbamoyl aspartate to dihydroorotate. This chain is Dihydroorotase, found in Jannaschia sp. (strain CCS1).